A 560-amino-acid chain; its full sequence is DNA ligase B (560 aa).

The active-site N6-AMP-lysine intermediate is the K124.

This sequence belongs to the NAD-dependent DNA ligase family. LigB subfamily.

It carries out the reaction NAD(+) + (deoxyribonucleotide)n-3'-hydroxyl + 5'-phospho-(deoxyribonucleotide)m = (deoxyribonucleotide)n+m + AMP + beta-nicotinamide D-nucleotide.. In terms of biological role, catalyzes the formation of phosphodiester linkages between 5'-phosphoryl and 3'-hydroxyl groups in double-stranded DNA using NAD as a coenzyme and as the energy source for the reaction. This chain is DNA ligase B, found in Escherichia coli O81 (strain ED1a).